A 371-amino-acid chain; its full sequence is Chitin deacetylase (371 aa).

The signal sequence occupies residues 1-20 (MLCRLFTLFITAALACCVAA). The interval 73–112 (PKPEPEPTAVPTMAPEPTTVPPTEPSGTYPPETTPTVEPT) is disordered. 2 stretches are compositionally biased toward low complexity: residues 79-89 (PTAVPTMAPEP) and 102-112 (PPETTPTVEPT). Cys-164 and Cys-358 form a disulfide bridge. N-linked (GlcNAc...) asparagine glycosylation occurs at Asn-167. Residues 168–353 (GTIALTFDDG…EIKKRGLRAV (186 aa)) form the NodB homology domain. Asp-175 functions as the Proton acceptor in the catalytic mechanism. Asp-175 contributes to the acetate binding site. The Co(2+) site is built by Asp-176, His-228, and His-232. Asn-239 is a glycosylation site (N-linked (GlcNAc...) asparagine). Acetate is bound at residue Tyr-270. His-327 serves as the catalytic Proton donor.

Belongs to the polysaccharide deacetylase family. The cofactor is Co(2+).

It catalyses the reaction [(1-&gt;4)-N-acetyl-beta-D-glucosaminyl](n) + n H2O = chitosan + n acetate. Functionally, hydrolyzes the N-acetamido groups of N-acetyl-D-glucosamine residues in chitin to form chitosan and acetate. The chain is Chitin deacetylase from Arthroderma benhamiae (strain ATCC MYA-4681 / CBS 112371) (Trichophyton mentagrophytes).